A 989-amino-acid chain; its full sequence is SWI/SNF-related matrix-associated actin-dependent regulator of chromatin subfamily A containing DEAD/H box 1 homolog (989 aa).

The disordered stretch occupies residues 1–288 (MSTTSDFQTG…RRAKRGETKN (288 aa)). Residues 72-105 (DDDDEDYVDETMPSEDEEDFDNNEEDEDDDDYEE) show a composition bias toward acidic residues. Positions 109–120 (RKRKAPSKKKLV) are enriched in basic residues. The segment covering 124–140 (ENYRREDSETPEPEMKR) has biased composition (basic and acidic residues). Residues 187-200 (DDESEDDFINDEEI) show a composition bias toward acidic residues. Basic and acidic residues-rich tracts occupy residues 201-221 (SEKGSGKGSEKEESEGSGKDS) and 241-250 (AQKEQKKKAE). Positions 251–276 (SDEDWEEDEDDMNADGDETPSDDSDI) are enriched in acidic residues. A compositionally biased stretch (basic and acidic residues) spans 277-288 (EERRAKRGETKN). Residues 406-574 (IMMYNKDLNA…ISLMYFVLSK (169 aa)) enclose the Helicase ATP-binding domain. 419-426 (DEMGLGKT) is a binding site for ATP. Positions 525 to 528 (DEGH) match the DEGH box motif. The region spanning 757 to 912 (QLDVMLPEIQ…GVKGQLDEDA (156 aa)) is the Helicase C-terminal domain. The disordered stretch occupies residues 941–989 (RYDDVEDDSGDSKNGIDAEEAAKKEDEAVKEPVEKEQQKEEESQPSTSA). The segment covering 950–982 (GDSKNGIDAEEAAKKEDEAVKEPVEKEQQKEEE) has biased composition (basic and acidic residues).

This sequence belongs to the SNF2/RAD54 helicase family.

It localises to the nucleus. The protein resides in the chromosome. The enzyme catalyses ATP + H2O = ADP + phosphate + H(+). Functionally, DNA helicase that possesses intrinsic ATP-dependent nucleosome-remodeling activity and is both required for DNA repair and heterochromatin organization. Promotes DNA end resection of double-strand breaks (DSBs) following DNA damage: probably acts by weakening histone DNA interactions in nucleosomes flanking DSBs. The protein is SWI/SNF-related matrix-associated actin-dependent regulator of chromatin subfamily A containing DEAD/H box 1 homolog of Caenorhabditis elegans.